Here is a 450-residue protein sequence, read N- to C-terminus: Benzene 1,2-dioxygenase subunit alpha (450 aa).

Residues 56-163 enclose the Rieske domain; that stretch reads LLGHETHIRK…VETYKGLIFA (108 aa). [2Fe-2S] cluster-binding residues include Cys96, His98, Cys116, and His119. Positions 222 and 228 each coordinate Fe cation.

This sequence belongs to the bacterial ring-hydroxylating dioxygenase alpha subunit family. This dioxygenase system consists of four proteins: the two subunits of the hydroxylase component (BedC1 and BedC2), a ferredoxin (BedB) and a ferredoxin reductase (BedA). It depends on [2Fe-2S] cluster as a cofactor. Fe cation serves as cofactor.

The enzyme catalyses benzene + NADH + O2 + H(+) = cis-1,2-dihydrobenzene-1,2-diol + NAD(+). The protein operates within aromatic compound metabolism; benzene degradation; catechol from benzene: step 1/2. This chain is Benzene 1,2-dioxygenase subunit alpha (bedC1), found in Pseudomonas putida (Arthrobacter siderocapsulatus).